The chain runs to 150 residues: Large ribosomal subunit protein bL9 (150 aa).

Belongs to the bacterial ribosomal protein bL9 family.

In terms of biological role, binds to the 23S rRNA. The polypeptide is Large ribosomal subunit protein bL9 (Erwinia tasmaniensis (strain DSM 17950 / CFBP 7177 / CIP 109463 / NCPPB 4357 / Et1/99)).